The sequence spans 250 residues: Pyrroloquinoline-quinone synthase (250 aa).

It belongs to the PqqC family.

The enzyme catalyses 6-(2-amino-2-carboxyethyl)-7,8-dioxo-1,2,3,4,7,8-hexahydroquinoline-2,4-dicarboxylate + 3 O2 = pyrroloquinoline quinone + 2 H2O2 + 2 H2O + H(+). It functions in the pathway cofactor biosynthesis; pyrroloquinoline quinone biosynthesis. Its function is as follows. Ring cyclization and eight-electron oxidation of 3a-(2-amino-2-carboxyethyl)-4,5-dioxo-4,5,6,7,8,9-hexahydroquinoline-7,9-dicarboxylic-acid to PQQ. This chain is Pyrroloquinoline-quinone synthase, found in Xanthomonas axonopodis pv. citri (strain 306).